Here is a 446-residue protein sequence, read N- to C-terminus: Probable beta-1,4-xylosyltransferase IRX9L (446 aa).

A disordered region spans residues 1–26; that stretch reads MSRRNAGAMQREGSVKDWEEFDPSPS. Residues 1 to 85 lie on the Cytoplasmic side of the membrane; it reads MSRRNAGAMQ…SRSKGMSLKR (85 aa). The chain crosses the membrane as a helical; Signal-anchor for type II membrane protein span at residues 86-106; sequence AMLQLLVCFMVGIFIGFTPPF. Over 107 to 446 the chain is Lumenal; that stretch reads SVDLPGKIAS…RNLDAVVPIT (340 aa). Residues Asn185, Asn258, Asn361, and Asn411 are each glycosylated (N-linked (GlcNAc...) asparagine).

This sequence belongs to the glycosyltransferase 43 family.

It is found in the golgi apparatus membrane. Probable beta-1,4-xylosyltransferase involved in xylan biosynthesis in cell walls. The chain is Probable beta-1,4-xylosyltransferase IRX9L from Oryza sativa subsp. japonica (Rice).